A 1159-amino-acid chain; its full sequence is MIIFKNNEIRFNSILKSILLLLLLFINGNNCKTAQQFLDENFNHALFREHQLEKEYKTKQLVKDDPNMYSDWTEVPAATAEAVTIMRGDDYYYDYDKEQKIEMIVFGSENAISSGSAQNYWYGQTCEATNFNNTPTTTCPNDCHSYWGQGQCNETSSTCICNYFFIGDDCSENVDPQHNWDKMNCNGGRYCPPIYNYPTPRSCVCPPGQAGLECTVCLNNEGCQALTGNYSSSFECNSSPYTYFEKSYSCVVTSAEVNGDLNNSTASASIDCQFPGGNYNTQTGVCSMNLYYRIHGSPLYFNCSFTECDRTILPGQNQSIVCQNSVCNCTTYCGFILDGLISAVTGEATFECGAQTNPDGTSNCLFSQYTINQMLPAIPLQCMSGECIDVATGAPTPPPIYPVPVASMSFLYIYVGSGVGFIGLTLLIGAIFLIFSLQEDRKNFKEDTHLVCELSFHNISCYVNERSGFFGKDVKRKQILDNVNGVCPPGQLTALMGLSGSGKTSLLDILSGRKNVGNIDGKVLINGAPVGKNFKRISGYVTQDDIQIGTLTCREHLMFAALLKLPENMSLEIKQQRVASVLEELGLTRVADNPIGTSEKRGISGGERRRLSIATELIVDPSILFIDEPTSGLDSHSASELITKLKQLANNSTKGQRTIIFSIHQPSAELFEQFDNLILLHQGNPYFSGKREDSVNYFIKQKIAGMTEFEQQNYRMHLKNPADFIISMVTDKNCQRFNSTYVDSRVASPFYQSTSPALSSNSNNSDINLNHHRIINNPHNQNIHHQQHHHHHRHIYGINGPSIDNNDSDSDSDERDHLLASDNINNNNNNNKVKNNDNNNKNNDDDVEDIEEASPIIVVGNQGEPLASHIKIGKVEEYATSFWTQFFVVCRRSLLNYMRNPFLLRTTYFVHIFVGLTLGYLFWKLPANLEPGCQNRFGAMFFMTALLSFGSITSLDLFYNDRIIFIRERANGFYRTSAYFLAKVVTDIIPMRVIPPIILGSICYYMIGLRPGILHFIYFLISLVLTSTVASSMCMAISTISPTFGTANMVSILLLFVFLLFDGFLLARSSIPKYLIGLVWISFMSYGLEIPVVNEFNGLWIEYNPPNTRPTYADGLEFLSTIGANPNRLFTDMYVLLGMIVGYLLLAYVFLRFLVREYR.

2 helical membrane passes run 11–31 and 415–435; these read FNSI…GNNC and VGSG…FLIF. The ABC transporter domain maps to 454-707; sequence LSFHNISCYV…FIKQKIAGMT (254 aa). Residue 497–504 coordinates ATP; that stretch reads GLSGSGKT. Residues 752–846 are disordered; sequence QSTSPALSSN…DNNNKNNDDD (95 aa). Composition is skewed to low complexity over residues 759–768 and 775–784; these read SSNSNNSDIN and INNPHNQNIH. The span at 785–795 shows a compositional bias: basic residues; the sequence is HQQHHHHHRHI. Residues 822–841 show a composition bias toward low complexity; sequence DNINNNNNNNKVKNNDNNNK. The region spanning 902–1154 is the ABC transmembrane type-2 domain; it reads FLLRTTYFVH…LLAYVFLRFL (253 aa). 6 helical membrane passes run 909–929, 937–957, 1005–1025, 1047–1067, 1074–1094, and 1135–1155; these read FVHI…PANL, FGAM…SLDL, YMIG…SLVL, ANMV…FLLA, YLIG…PVVN, and VLLG…RFLV.

The protein belongs to the ABC transporter superfamily. ABCG family. Eye pigment precursor importer (TC 3.A.1.204) subfamily.

The protein localises to the membrane. The chain is ABC transporter G family member 24 (abcG24) from Dictyostelium discoideum (Social amoeba).